The sequence spans 506 residues: Cysteine--tRNA ligase (506 aa).

Cysteine 34 is a Zn(2+) binding site. A 'HIGH' region motif is present at residues 36–46 (PTVYDFAHIGN). Residues cysteine 230, histidine 269, and glutamate 273 each contribute to the Zn(2+) site. Residues 302–306 (KMSKS) carry the 'KMSKS' region motif. Lysine 305 serves as a coordination point for ATP.

Belongs to the class-I aminoacyl-tRNA synthetase family. In terms of assembly, monomer. The cofactor is Zn(2+).

It is found in the cytoplasm. The enzyme catalyses tRNA(Cys) + L-cysteine + ATP = L-cysteinyl-tRNA(Cys) + AMP + diphosphate. In Brucella abortus (strain S19), this protein is Cysteine--tRNA ligase.